A 451-amino-acid polypeptide reads, in one-letter code: Tubulin gamma-1 chain (451 aa).

Serine 131 bears the Phosphoserine; by BRSK1 mark. 142–148 (AGGTGSG) provides a ligand contact to GTP.

This sequence belongs to the tubulin family. Component of the gamma-tubulin ring complex (gTuRC) consisting of TUBGCP2, TUBGCP3, TUBGCP4, TUBGCP5 and TUBGCP6 and gamma-tubulin TUBG1 or TUBG2. TUBGCP2, TUBGCP3, TUBGCP4, TUBGCP5 and TUBGCP6 assemble in a 5:5:2:1:1 stoichiometry; each is associated with a gamma-tubulin, thereby arranging 14 gamma-tubulins in a helical manner. Gamma-tubulin at the first position is blocked by TUBGCP3 at the last position, allowing 13 protafilaments to grow into a microtubule. The gTuRC (via TUBGCP3 and TUBGCP6) interacts with ACTB and MZT1; the interactions form a luminal bridge that stabilizes the initial structure during complex assembly. The gTuRC (via TUBGCP2) interacts with MZT2A/MZT2B and CDK5RAP2 (via CM1 motif); the interactions play a role in gTuRC activation. Interacts with alpha-beta tubulin heterodimers; the interaction allows microtubules to nucleate from the gTuRC. Interacts with B9D2. Interacts with CDK5RAP2; the interaction is leading to centrosomal localization of TUBG1 and CDK5RAP2. Interacts with CIMAP3. Interacts with SAS6 and NUP62 at the centrosome. Interacts with EML3 (phosphorylated at 'Thr-881') and HAUS8. Interacts with DNM2; this interaction may participate in centrosome cohesion. Interacts with CCDC66. In terms of processing, phosphorylation at Ser-131 by BRSK1 regulates centrosome duplication, possibly by mediating relocation of gamma-tubulin and its associated proteins from the cytoplasm to the centrosome.

The protein localises to the cytoplasm. It is found in the cytoskeleton. The protein resides in the microtubule organizing center. It localises to the centrosome. Its subcellular location is the spindle. Functionally, tubulin is the major constituent of microtubules, protein filaments consisting of alpha- and beta-tubulin heterodimers. Gamma-tubulin is a key component of the gamma-tubulin ring complex (gTuRC) which mediates microtubule nucleation. The gTuRC regulates the minus-end nucleation of alpha-beta tubulin heterodimers that grow into microtubule protafilaments, a critical step in centrosome duplication and spindle formation. The protein is Tubulin gamma-1 chain of Canis lupus familiaris (Dog).